Here is a 408-residue protein sequence, read N- to C-terminus: S-adenosylmethionine:tRNA ribosyltransferase-isomerase (408 aa).

It belongs to the QueA family. As to quaternary structure, monomer.

Its subcellular location is the cytoplasm. It carries out the reaction 7-aminomethyl-7-carbaguanosine(34) in tRNA + S-adenosyl-L-methionine = epoxyqueuosine(34) in tRNA + adenine + L-methionine + 2 H(+). It participates in tRNA modification; tRNA-queuosine biosynthesis. Transfers and isomerizes the ribose moiety from AdoMet to the 7-aminomethyl group of 7-deazaguanine (preQ1-tRNA) to give epoxyqueuosine (oQ-tRNA). The sequence is that of S-adenosylmethionine:tRNA ribosyltransferase-isomerase from Trichormus variabilis (strain ATCC 29413 / PCC 7937) (Anabaena variabilis).